We begin with the raw amino-acid sequence, 367 residues long: Probable L-aspartate decarboxylase (367 aa).

K216 carries the N6-(pyridoxal phosphate)lysine modification.

It belongs to the group II decarboxylase family. MfnA subfamily. Pyridoxal 5'-phosphate is required as a cofactor.

The catalysed reaction is L-aspartate + H(+) = beta-alanine + CO2. It participates in cofactor biosynthesis; coenzyme A biosynthesis. In terms of biological role, catalyzes the decarboxylation of L-aspartate to produce beta-alanine. The sequence is that of Probable L-aspartate decarboxylase from Archaeoglobus fulgidus (strain ATCC 49558 / DSM 4304 / JCM 9628 / NBRC 100126 / VC-16).